Consider the following 758-residue polypeptide: 1-phosphatidylinositol 4,5-bisphosphate phosphodiesterase delta-4 (758 aa).

The PH domain maps to 16-124; the sequence is QLMQAGSPMR…WIQGLEKLIE (109 aa). The segment at 26-53 is substrate binding; that stretch reads KVKSRSWKKQRYFKLQEDCMTIWYNSKK. 3 consecutive EF-hand domains span residues 134–169, 170–205, and 206–237; these read LMDQ…MNVD, MSEH…LTQR, and DEVL…GQLE. Ca(2+)-binding residues include Asp-147, Asn-149, Asp-151, Arg-153, Glu-158, Asp-183, Ser-185, Ser-187, Thr-189, and Glu-194. The GBA motif lies at 213–243; that stretch reads QDFSKDGKKLTLLEFVDFLQQGQLEEENTEE. In terms of domain architecture, PI-PLC X-box spans 290–435; the sequence is QDMMQPLCHY…LRGKILLKGK (146 aa). His-305 is an active-site residue. The Ca(2+) site is built by Asn-306, Glu-335, and Asp-337. His-350 is a catalytic residue. Glu-384 contributes to the Ca(2+) binding site. The substrate site is built by Lys-433 and Lys-435. Residues 446–468 are compositionally biased toward acidic residues; sequence EQPDDSLGEVSDEEENIEVEEER. Residues 446-479 are disordered; it reads EQPDDSLGEVSDEEENIEVEEERNEDKKRAKKSK. Residues 486–602 enclose the PI-PLC Y-box domain; that stretch reads LSDCVIYCKS…GYVLKPSFMR (117 aa). Residues Ser-515 and Arg-542 each contribute to the substrate site. One can recognise a C2 domain in the interval 602 to 731; sequence RHVETTFNPD…SGYRHIHLLS (130 aa). 6 residues coordinate Ca(2+): Ile-645, Asp-647, Asn-671, Asp-700, Tyr-701, and Asp-702. A PDZ-binding motif is present at residues 726–729; it reads HIHL.

Ca(2+) serves as cofactor.

Its subcellular location is the membrane. The protein localises to the nucleus. The protein resides in the cytoplasm. It is found in the endoplasmic reticulum. The catalysed reaction is a 1,2-diacyl-sn-glycero-3-phospho-(1D-myo-inositol-4,5-bisphosphate) + H2O = 1D-myo-inositol 1,4,5-trisphosphate + a 1,2-diacyl-sn-glycerol + H(+). It catalyses the reaction a 1,2-diacyl-sn-glycero-3-phospho-(1D-myo-inositol) + H2O = 1D-myo-inositol 1-phosphate + a 1,2-diacyl-sn-glycerol + H(+). Its function is as follows. Hydrolyzes the phosphatidylinositol 4,5-bisphosphate (PIP2) to generate 2 second messenger molecules diacylglycerol (DAG) and inositol 1,4,5-trisphosphate (IP3). DAG mediates the activation of protein kinase C (PKC), while IP3 releases Ca(2+) from intracellular stores. This is 1-phosphatidylinositol 4,5-bisphosphate phosphodiesterase delta-4 (plcd4) from Xenopus laevis (African clawed frog).